The chain runs to 461 residues: Anthocyanidin 3-O-glucoside 5-O-glucosyltransferase (461 aa).

The first 15 residues, 1–15 (MSRAHVLLATFPAQG), serve as a signal peptide directing secretion. The active-site Proton acceptor is the His-16. His-16 lines the an anthocyanidin pocket. The UDP-alpha-D-glucose site is built by Gln-338, His-353, Trp-356, Asn-357, Ser-358, Glu-361, Asp-377, and Gln-378.

This sequence belongs to the UDP-glycosyltransferase family.

The enzyme catalyses an anthocyanidin 3-O-beta-D-glucoside + UDP-alpha-D-glucose = an anthocyanidin 3,5-di-O-beta-D-glucoside + UDP + 2 H(+). The protein operates within pigment biosynthesis; anthocyanin biosynthesis. In terms of biological role, catalyzes the glucosylation at the O-5 position of anthocyanidin 3-glucosides to form anthocyanidin 3,5-di-O-glucosides using UDP-glucose as sugar donor. Anthocyanidin 3,5-di-O-glucosides are molecules that are responsible for pigmentation. Also acts on anthocyanidin 3-O-(6-O-malonylglucoside). Much less active with hydroxycinnamoylglucose derivatives. No activity in the absence of the 3-O-glucoside group. This chain is Anthocyanidin 3-O-glucoside 5-O-glucosyltransferase (HGT8), found in Verbena hybrida (Garden vervain).